Reading from the N-terminus, the 1079-residue chain is Carbamoyl phosphate synthase large chain (1079 aa).

Residues 2–403 (PKSTDIKSIL…SIQKAIRGLE (402 aa)) form a carboxyphosphate synthetic domain region. ATP-binding residues include R129, R169, G175, G176, E208, L210, E215, G241, I242, H243, Q285, and E299. The ATP-grasp 1 domain maps to 133–328 (EHSMKKLNLE…IAKIAAKLAI (196 aa)). Mg(2+) contacts are provided by Q285, E299, and N301. Residues Q285, E299, and N301 each coordinate Mn(2+). The interval 404-553 (VGASGFDSKI…YSTWEDECES (150 aa)) is oligomerization domain. The tract at residues 554–936 (HPSKNNKKII…AFSKSMLGAH (383 aa)) is carbamoyl phosphate synthetic domain. The 192-residue stretch at 679–870 (QKTVNKLRLQ…LAKISVRVMC (192 aa)) folds into the ATP-grasp 2 domain. ATP contacts are provided by R715, Q754, L756, E761, G786, V787, H788, S789, Q829, and E841. 3 residues coordinate Mg(2+): Q829, E841, and N843. Mn(2+) is bound by residues Q829, E841, and N843. The region spanning 937–1079 (TNMKKSGRVL…KKIQLFYTKK (143 aa)) is the MGS-like domain. Positions 937–1079 (TNMKKSGRVL…KKIQLFYTKK (143 aa)) are allosteric domain.

The protein belongs to the CarB family. In terms of assembly, composed of two chains; the small (or glutamine) chain promotes the hydrolysis of glutamine to ammonia, which is used by the large (or ammonia) chain to synthesize carbamoyl phosphate. Tetramer of heterodimers (alpha,beta)4. Mg(2+) serves as cofactor. Mn(2+) is required as a cofactor.

It catalyses the reaction hydrogencarbonate + L-glutamine + 2 ATP + H2O = carbamoyl phosphate + L-glutamate + 2 ADP + phosphate + 2 H(+). The catalysed reaction is hydrogencarbonate + NH4(+) + 2 ATP = carbamoyl phosphate + 2 ADP + phosphate + 2 H(+). It participates in amino-acid biosynthesis; L-arginine biosynthesis; carbamoyl phosphate from bicarbonate: step 1/1. The protein operates within pyrimidine metabolism; UMP biosynthesis via de novo pathway; (S)-dihydroorotate from bicarbonate: step 1/3. Its function is as follows. Large subunit of the glutamine-dependent carbamoyl phosphate synthetase (CPSase). CPSase catalyzes the formation of carbamoyl phosphate from the ammonia moiety of glutamine, carbonate, and phosphate donated by ATP, constituting the first step of 2 biosynthetic pathways, one leading to arginine and/or urea and the other to pyrimidine nucleotides. The large subunit (synthetase) binds the substrates ammonia (free or transferred from glutamine from the small subunit), hydrogencarbonate and ATP and carries out an ATP-coupled ligase reaction, activating hydrogencarbonate by forming carboxy phosphate which reacts with ammonia to form carbamoyl phosphate. The protein is Carbamoyl phosphate synthase large chain of Buchnera aphidicola subsp. Acyrthosiphon pisum (strain APS) (Acyrthosiphon pisum symbiotic bacterium).